The following is an 89-amino-acid chain: Small ribosomal subunit protein bS20 (89 aa).

It belongs to the bacterial ribosomal protein bS20 family.

Its function is as follows. Binds directly to 16S ribosomal RNA. The polypeptide is Small ribosomal subunit protein bS20 (Helicobacter acinonychis (strain Sheeba)).